The following is a 106-amino-acid chain: uncharacterized protein (106 aa).

Over 1-6 (MYQTSP) the chain is Cytoplasmic. A helical transmembrane segment spans residues 7-27 (LSLFYFQVLVPKFLECFLCFP). The Extracellular portion of the chain corresponds to 28 to 32 (YHKIS). The chain crosses the membrane as a helical span at residues 33–53 (LVALLSFFYCQLQTNMIILLS). The Cytoplasmic portion of the chain corresponds to 54–73 (QIKRFLYRQIMIALKIKAKK). A helical transmembrane segment spans residues 74 to 94 (FWFIFKYFNVSCDARLFNELF). Over 95 to 106 (YIFQTYVSVDSK) the chain is Extracellular.

The protein resides in the membrane. This is an uncharacterized protein from Saccharomyces cerevisiae (strain ATCC 204508 / S288c) (Baker's yeast).